Consider the following 485-residue polypeptide: Zinc finger protein 639 (485 aa).

The span at 1 to 14 (MNEYPKKRKRKTLH) shows a compositional bias: basic residues. The interval 1 to 20 (MNEYPKKRKRKTLHPSRYSD) is disordered. Ser-60 is subject to Phosphoserine. Residue Lys-76 forms a Glycyl lysine isopeptide (Lys-Gly) (interchain with G-Cter in SUMO2) linkage. Phosphoserine is present on Ser-88. Glycyl lysine isopeptide (Lys-Gly) (interchain with G-Cter in SUMO2) cross-links involve residues Lys-177, Lys-181, and Lys-226. 8 C2H2-type zinc fingers span residues 204 to 227 (YKCELCEFNSKYFSDLKQHMILKH), 233 to 255 (NVCRVCKESFSTNMLLIEHAKLH), 260 to 283 (YICKYCDYKTVIFENLSQHIADTH), 289 to 311 (YWCEQCDVQFSSSSELYLHFQEH), 374 to 397 (FVCQVCGFRSRLHTNVNRHVAIEH), 403 to 425 (HVCDDCGKGFSSMLEYCKHLNSH), 431 to 454 (YLCQYCEYSTGQIEDLKIHLDFKH), and 460 to 482 (HKCSDCLMRFGNERELISHLPVH). The tract at residues 371–455 (KNFFVCQVCG…LKIHLDFKHS (85 aa)) is interaction with CTNNA2.

This sequence belongs to the krueppel C2H2-type zinc-finger protein family. Interacts with CTNNA2.

It is found in the nucleus. Binds DNA and may function as a transcriptional repressor. This chain is Zinc finger protein 639 (ZNF639), found in Bos taurus (Bovine).